A 314-amino-acid polypeptide reads, in one-letter code: Melanoma-associated antigen 3 (314 aa).

Residues 1 to 20 (MPLEQRSQHCKPEEGLEARG) show a composition bias toward basic and acidic residues. Positions 1–99 (MPLEQRSQHC…QEEEGPSTFP (99 aa)) are disordered. A compositionally biased stretch (low complexity) spans 21 to 44 (EALGLVGAQAPATEEQEAASSSST). Residues 65-87 (PQGASSLPTTMNYPLWSQSYEDS) show a composition bias toward polar residues. An MAGE domain is found at 109 to 308 (LSRKVAELVH…ISYPPLHEWV (200 aa)).

In terms of assembly, interacts with TRIM28. Post-translationally, ubiquitinated by the DCX(DCAF12) complex specifically recognizes the diglutamate (Glu-Glu) at the C-terminus, leading to its degradation. As to expression, expressed in many tumors of several types, such as melanoma, head and neck squamous cell carcinoma, lung carcinoma and breast carcinoma, but not in normal tissues except for testes and placenta. Never expressed in kidney tumors, Leukemias and lymphomas.

Its function is as follows. Activator of ubiquitin ligase activity of RING-type zinc finger-containing E3 ubiquitin-protein ligases that acts as a repressor of autophagy. May enhance ubiquitin ligase activity of TRIM28 and stimulate p53/TP53 ubiquitination by TRIM28. Proposed to act through recruitment and/or stabilization of the Ubl-conjugating enzyme (E2) at the E3:substrate complex. May play a role in embryonal development and tumor transformation or aspects of tumor progression. In vitro promotes cell viability in melanoma cell lines. Antigen recognized on a melanoma by autologous cytolytic T-lymphocytes. The polypeptide is Melanoma-associated antigen 3 (Homo sapiens (Human)).